A 444-amino-acid chain; its full sequence is UDP-N-acetylmuramoylalanine--D-glutamate ligase (444 aa).

109–115 (GSNGKTT) is an ATP binding site.

It belongs to the MurCDEF family.

It is found in the cytoplasm. It catalyses the reaction UDP-N-acetyl-alpha-D-muramoyl-L-alanine + D-glutamate + ATP = UDP-N-acetyl-alpha-D-muramoyl-L-alanyl-D-glutamate + ADP + phosphate + H(+). The protein operates within cell wall biogenesis; peptidoglycan biosynthesis. In terms of biological role, cell wall formation. Catalyzes the addition of glutamate to the nucleotide precursor UDP-N-acetylmuramoyl-L-alanine (UMA). This is UDP-N-acetylmuramoylalanine--D-glutamate ligase from Bacteroides fragilis (strain ATCC 25285 / DSM 2151 / CCUG 4856 / JCM 11019 / LMG 10263 / NCTC 9343 / Onslow / VPI 2553 / EN-2).